The chain runs to 261 residues: tRNA pseudouridine synthase A (261 aa).

D51 (nucleophile) is an active-site residue. Residue Y109 coordinates substrate.

It belongs to the tRNA pseudouridine synthase TruA family. Homodimer.

The catalysed reaction is uridine(38/39/40) in tRNA = pseudouridine(38/39/40) in tRNA. Functionally, formation of pseudouridine at positions 38, 39 and 40 in the anticodon stem and loop of transfer RNAs. The polypeptide is tRNA pseudouridine synthase A (Shewanella loihica (strain ATCC BAA-1088 / PV-4)).